We begin with the raw amino-acid sequence, 294 residues long: Phosphatidylserine decarboxylase proenzyme (294 aa).

Catalysis depends on charge relay system; for autoendoproteolytic cleavage activity residues Asp-100, His-157, and Ser-261. Ser-261 (schiff-base intermediate with substrate; via pyruvic acid; for decarboxylase activity) is an active-site residue. Pyruvic acid (Ser); by autocatalysis is present on Ser-261.

It belongs to the phosphatidylserine decarboxylase family. PSD-B subfamily. Prokaryotic type I sub-subfamily. In terms of assembly, heterodimer of a large membrane-associated beta subunit and a small pyruvoyl-containing alpha subunit. Requires pyruvate as cofactor. Is synthesized initially as an inactive proenzyme. Formation of the active enzyme involves a self-maturation process in which the active site pyruvoyl group is generated from an internal serine residue via an autocatalytic post-translational modification. Two non-identical subunits are generated from the proenzyme in this reaction, and the pyruvate is formed at the N-terminus of the alpha chain, which is derived from the carboxyl end of the proenzyme. The autoendoproteolytic cleavage occurs by a canonical serine protease mechanism, in which the side chain hydroxyl group of the serine supplies its oxygen atom to form the C-terminus of the beta chain, while the remainder of the serine residue undergoes an oxidative deamination to produce ammonia and the pyruvoyl prosthetic group on the alpha chain. During this reaction, the Ser that is part of the protease active site of the proenzyme becomes the pyruvoyl prosthetic group, which constitutes an essential element of the active site of the mature decarboxylase.

It is found in the cell membrane. The catalysed reaction is a 1,2-diacyl-sn-glycero-3-phospho-L-serine + H(+) = a 1,2-diacyl-sn-glycero-3-phosphoethanolamine + CO2. It participates in phospholipid metabolism; phosphatidylethanolamine biosynthesis; phosphatidylethanolamine from CDP-diacylglycerol: step 2/2. Functionally, catalyzes the formation of phosphatidylethanolamine (PtdEtn) from phosphatidylserine (PtdSer). The chain is Phosphatidylserine decarboxylase proenzyme from Histophilus somni (strain 129Pt) (Haemophilus somnus).